We begin with the raw amino-acid sequence, 167 residues long: Cyclic pyranopterin monophosphate synthase 2 (167 aa).

A disordered region spans residues 1–23 (MARASGASDYRSGELSHQDERGA). The span at 11–23 (RSGELSHQDERGA) shows a compositional bias: basic and acidic residues. Substrate-binding positions include 86–88 (LCH) and 122–123 (ME). The active site involves Asp-137.

This sequence belongs to the MoaC family. As to quaternary structure, homohexamer; trimer of dimers.

It carries out the reaction (8S)-3',8-cyclo-7,8-dihydroguanosine 5'-triphosphate = cyclic pyranopterin phosphate + diphosphate. It functions in the pathway cofactor biosynthesis; molybdopterin biosynthesis. Functionally, catalyzes the conversion of (8S)-3',8-cyclo-7,8-dihydroguanosine 5'-triphosphate to cyclic pyranopterin monophosphate (cPMP). This Mycobacterium bovis (strain ATCC BAA-935 / AF2122/97) protein is Cyclic pyranopterin monophosphate synthase 2 (moaC2).